Reading from the N-terminus, the 386-residue chain is Methylthioribose-1-phosphate isomerase (386 aa).

Asp-261 acts as the Proton donor in catalysis.

Belongs to the eIF-2B alpha/beta/delta subunits family. MtnA subfamily.

Its subcellular location is the cytoplasm. The protein resides in the nucleus. It catalyses the reaction 5-(methylsulfanyl)-alpha-D-ribose 1-phosphate = 5-(methylsulfanyl)-D-ribulose 1-phosphate. The protein operates within amino-acid biosynthesis; L-methionine biosynthesis via salvage pathway; L-methionine from S-methyl-5-thio-alpha-D-ribose 1-phosphate: step 1/6. Functionally, catalyzes the interconversion of methylthioribose-1-phosphate (MTR-1-P) into methylthioribulose-1-phosphate (MTRu-1-P). The polypeptide is Methylthioribose-1-phosphate isomerase (Paracoccidioides brasiliensis (strain Pb03)).